A 186-amino-acid polypeptide reads, in one-letter code: TATA-box-binding protein 2 (186 aa).

2 repeat units span residues 10-86 (IQNV…FDKL) and 101-179 (VQNI…VERI). Glycyl lysine isopeptide (Lys-Gly) (interchain with G-Cter in SAMP2) cross-links involve residues lysine 53 and lysine 63.

This sequence belongs to the TBP family.

In terms of biological role, general factor that plays a role in the activation of archaeal genes transcribed by RNA polymerase. Binds specifically to the TATA box promoter element which lies close to the position of transcription initiation. In Haloferax volcanii (strain ATCC 29605 / DSM 3757 / JCM 8879 / NBRC 14742 / NCIMB 2012 / VKM B-1768 / DS2) (Halobacterium volcanii), this protein is TATA-box-binding protein 2 (tbp2).